Reading from the N-terminus, the 192-residue chain is Putative cyclic ADP-D-ribose synthase ThsB1 (192 aa).

This sequence belongs to the Thoeris B TIR-like family. As to quaternary structure, monomer; not seen to interact with ThsA.

The protein resides in the cytoplasm. Its activity is regulated as follows. Activated upon phage infection. Its function is as follows. TIR-like domain-containing component of the Thoeris antiviral defense system, composed of ThsA and ThsB. Expression of ThsA and ThsB in B.subtilis (strain BEST7003) confers resistance to phages SBSphiC, SBSphiJ and SPO1. Phage infection activates this protein so that 30 to 45 minutes post-infection with phage SPO1 it generates a signal molecule that in turn activates the NAD(+) hydrolase activity of ThsA. The signal is similar to cyclic ADP-D-ribose, but how it differs is unknown. In vitro purified (but unactivated) ThsB has no NAD(+) hydrolyzing activity, no activity on AMP, CMP, GMP or UMP, does not alter the activity of ThsA, does not bind DNA. Hydrolyzes NAD(+) to make a cyclic ADP-D-ribose (cADPR) signaling molecule; might make 3'cADPR. This is Putative cyclic ADP-D-ribose synthase ThsB1 from Bacillus cereus (strain MSX-D12).